Consider the following 635-residue polypeptide: Threonine--tRNA ligase (635 aa).

In terms of domain architecture, TGS spans Met-1–Thr-61. The segment at Asp-242 to Pro-533 is catalytic. Positions 333, 384, and 510 each coordinate Zn(2+).

Belongs to the class-II aminoacyl-tRNA synthetase family. As to quaternary structure, homodimer. Zn(2+) serves as cofactor.

The protein localises to the cytoplasm. It catalyses the reaction tRNA(Thr) + L-threonine + ATP = L-threonyl-tRNA(Thr) + AMP + diphosphate + H(+). Catalyzes the attachment of threonine to tRNA(Thr) in a two-step reaction: L-threonine is first activated by ATP to form Thr-AMP and then transferred to the acceptor end of tRNA(Thr). Also edits incorrectly charged L-seryl-tRNA(Thr). The protein is Threonine--tRNA ligase of Nitrosomonas europaea (strain ATCC 19718 / CIP 103999 / KCTC 2705 / NBRC 14298).